The following is a 325-amino-acid chain: Lipoyl synthase (325 aa).

Positions 1–31 are disordered; the sequence is MANLIDNTARSAASDARAARHPEKQKRADTP. Over residues 17-31 the composition is skewed to basic and acidic residues; it reads RAARHPEKQKRADTP. Residues Cys-65, Cys-70, Cys-76, Cys-91, Cys-95, Cys-98, and Ser-304 each contribute to the [4Fe-4S] cluster site. The Radical SAM core domain maps to 77 to 293; that stretch reads WEQKHATFMI…ETIARAKGFL (217 aa).

Belongs to the radical SAM superfamily. Lipoyl synthase family. [4Fe-4S] cluster is required as a cofactor.

It is found in the cytoplasm. The enzyme catalyses [[Fe-S] cluster scaffold protein carrying a second [4Fe-4S](2+) cluster] + N(6)-octanoyl-L-lysyl-[protein] + 2 oxidized [2Fe-2S]-[ferredoxin] + 2 S-adenosyl-L-methionine + 4 H(+) = [[Fe-S] cluster scaffold protein] + N(6)-[(R)-dihydrolipoyl]-L-lysyl-[protein] + 4 Fe(3+) + 2 hydrogen sulfide + 2 5'-deoxyadenosine + 2 L-methionine + 2 reduced [2Fe-2S]-[ferredoxin]. The protein operates within protein modification; protein lipoylation via endogenous pathway; protein N(6)-(lipoyl)lysine from octanoyl-[acyl-carrier-protein]: step 2/2. In terms of biological role, catalyzes the radical-mediated insertion of two sulfur atoms into the C-6 and C-8 positions of the octanoyl moiety bound to the lipoyl domains of lipoate-dependent enzymes, thereby converting the octanoylated domains into lipoylated derivatives. In Maricaulis maris (strain MCS10) (Caulobacter maris), this protein is Lipoyl synthase.